Reading from the N-terminus, the 391-residue chain is MSNNEDPINEFVSNGDSFEKVKQRLKDRSKKVAQTKEILSKQANQTKEILSKQAVKIAKQAEEHESFINKVTHLLGVLGFGGFCFLLGARPQDIPYVYCLFFFIFVPLRWIYYRFKKWHYFLLDFCYYANTIFLVDLLLYPKDEKLFMVCFSFAEGPLAWALIVWRCSLVFSSVDKIVSVLIHLLPGLVFFTIRWWNPATFEAMHPEGTSGRASWPYVEDKSFLFTWLFLVPLVAYFLWQLLYFLIVNVLRRQRLLRDPEVMTSYRELSKKAQKANNVWWRLSGLLGDQNRMLMYILLQALFTVATTALTVPIFLSYELHAVFQILKVSAAVWNGGSFLLDVMPRQVILKEKKKSELQPAHIQQYHSEPKQDQSPNSMEIRMKTIHSAEEQ.

Residues 1-66 (MSNNEDPINE…IAKQAEEHES (66 aa)) lie on the Cytoplasmic side of the membrane. A helical membrane pass occupies residues 67–87 (FINKVTHLLGVLGFGGFCFLL). The Lumenal segment spans residues 88–92 (GARPQ). The helical transmembrane segment at 93-113 (DIPYVYCLFFFIFVPLRWIYY) threads the bilayer. Topologically, residues 114-119 (RFKKWH) are cytoplasmic. Residues 120 to 140 (YFLLDFCYYANTIFLVDLLLY) traverse the membrane as a helical segment. The Lumenal portion of the chain corresponds to 141–144 (PKDE). The helical transmembrane segment at 145–165 (KLFMVCFSFAEGPLAWALIVW) threads the bilayer. Residues 166 to 172 (RCSLVFS) lie on the Cytoplasmic side of the membrane. A helical transmembrane segment spans residues 173 to 193 (SVDKIVSVLIHLLPGLVFFTI). Topologically, residues 194 to 226 (RWWNPATFEAMHPEGTSGRASWPYVEDKSFLFT) are lumenal. The chain crosses the membrane as a helical span at residues 227–247 (WLFLVPLVAYFLWQLLYFLIV). At 248-294 (NVLRRQRLLRDPEVMTSYRELSKKAQKANNVWWRLSGLLGDQNRMLM) the chain is on the cytoplasmic side. A helical transmembrane segment spans residues 295–315 (YILLQALFTVATTALTVPIFL). Residues 316-318 (SYE) lie on the Lumenal side of the membrane. The helical transmembrane segment at 319 to 339 (LHAVFQILKVSAAVWNGGSFL) threads the bilayer. Residues 340–391 (LDVMPRQVILKEKKKSELQPAHIQQYHSEPKQDQSPNSMEIRMKTIHSAEEQ) lie on the Cytoplasmic side of the membrane. Residues 354 to 391 (KSELQPAHIQQYHSEPKQDQSPNSMEIRMKTIHSAEEQ) form a disordered region. Basic and acidic residues predominate over residues 380 to 391 (IRMKTIHSAEEQ).

The protein belongs to the GPC1 family.

Its subcellular location is the membrane. It carries out the reaction sn-glycerol 3-phosphocholine + an acyl-CoA = a monoacyl-sn-glycero-3-phosphocholine + CoA. The catalysed reaction is sn-glycero-3-phosphoethanolamine + an acyl-CoA = a monoacyl-sn-glycero-3-phosphoethanolamine + CoA. The enzyme catalyses sn-glycerol 3-phosphocholine + hexadecanoyl-CoA = hexadecanoyl-sn-glycero-3-phosphocholine + CoA. It catalyses the reaction (9Z)-hexadecenoyl-CoA + sn-glycerol 3-phosphocholine = (9Z-hexadecenoyl)-sn-glycero-3-phosphocholine + CoA. It carries out the reaction (9Z,12Z)-octadecadienoyl-CoA + sn-glycerol 3-phosphocholine = (9Z,12Z-octadecadienoyl)-sn-glycero-3-phosphocholine + CoA. The catalysed reaction is (12R)-hydroxy-(9Z)-octadecenoyl-CoA + sn-glycerol 3-phosphocholine = (12R-hydroxy-9Z-octadecenoyl)-sn-glycero-3-phosphocholine + CoA. The enzyme catalyses (9Z,12Z,15Z)-octadecatrienoyl-CoA + sn-glycerol 3-phosphocholine = (9Z,12Z,15Z-octadecatrienoyl)-sn-glycero-3-phosphocholine + CoA. It catalyses the reaction sn-glycerol 3-phosphocholine + (9Z)-octadecenoyl-CoA = (9Z-octadecenoyl)-sn-glycero-3-phosphocholine + CoA. Glycerophosphocholine acyltransferase (GPCAT) that utilizes acyl-CoA to acylate glycero-3-phosphocholine (GPC), forming lysophosphatidylcholine (LPC). Shows broad acyl specificities with a preference for 16:0-CoA, polyunsaturated acyl-CoA, and the hydroxylated ricinoleoyl-CoA. Also catalyzes the acylation of glycero-3-phosphoethanolamine (GPE) with acyl-CoA. In addition to acyl-CoA, GPCAT efficiently utilizes LPC and lysophosphatidylethanolamine (LPE) as acyl donors in the acylation of GPC. Contributes to the maintenance of phosphatidylcholine (PC) homeostasis and might also have specific functions in acyl editing of PC, such as transferring acyl groups modified at the sn-2 position of PC to the sn-1. In Ricinus communis (Castor bean), this protein is Glycerophosphocholine acyltransferase 1.